Here is a 128-residue protein sequence, read N- to C-terminus: Large ribosomal subunit protein uL22 (128 aa).

It belongs to the universal ribosomal protein uL22 family. As to quaternary structure, part of the 50S ribosomal subunit.

Its function is as follows. This protein binds specifically to 23S rRNA; its binding is stimulated by other ribosomal proteins, e.g. L4, L17, and L20. It is important during the early stages of 50S assembly. It makes multiple contacts with different domains of the 23S rRNA in the assembled 50S subunit and ribosome. Functionally, the globular domain of the protein is located near the polypeptide exit tunnel on the outside of the subunit, while an extended beta-hairpin is found that lines the wall of the exit tunnel in the center of the 70S ribosome. The sequence is that of Large ribosomal subunit protein uL22 from Prochlorococcus marinus subsp. pastoris (strain CCMP1986 / NIES-2087 / MED4).